The sequence spans 315 residues: Ribosomal RNA small subunit methyltransferase H (315 aa).

S-adenosyl-L-methionine contacts are provided by residues 35-37 (GGH), aspartate 55, phenylalanine 80, aspartate 102, and glutamine 109.

It belongs to the methyltransferase superfamily. RsmH family.

It is found in the cytoplasm. The catalysed reaction is cytidine(1402) in 16S rRNA + S-adenosyl-L-methionine = N(4)-methylcytidine(1402) in 16S rRNA + S-adenosyl-L-homocysteine + H(+). In terms of biological role, specifically methylates the N4 position of cytidine in position 1402 (C1402) of 16S rRNA. In Shewanella pealeana (strain ATCC 700345 / ANG-SQ1), this protein is Ribosomal RNA small subunit methyltransferase H.